The following is a 192-amino-acid chain: Ubiquitin-conjugating enzyme E2 27 (192 aa).

The region spanning isoleucine 2 to lysine 150 is the UBC core domain. Cysteine 88 functions as the Glycyl thioester intermediate in the catalytic mechanism. Residues serine 153–alanine 192 enclose the UBA domain.

The protein belongs to the ubiquitin-conjugating enzyme family. In terms of tissue distribution, expressed in seeds, pistils, siliques, hypocotyls and leaves.

The enzyme catalyses S-ubiquitinyl-[E1 ubiquitin-activating enzyme]-L-cysteine + [E2 ubiquitin-conjugating enzyme]-L-cysteine = [E1 ubiquitin-activating enzyme]-L-cysteine + S-ubiquitinyl-[E2 ubiquitin-conjugating enzyme]-L-cysteine.. It participates in protein modification; protein ubiquitination. In terms of biological role, accepts the ubiquitin from the E1 complex and catalyzes its covalent attachment to other proteins. This Arabidopsis thaliana (Mouse-ear cress) protein is Ubiquitin-conjugating enzyme E2 27 (UBC27).